The chain runs to 221 residues: Nuclear phosphoprotein UL3 homolog (221 aa).

This sequence belongs to the alphaherpesvirinae HHV-1 UL3 family. Phosphorylated.

It is found in the host nucleus. The sequence is that of Nuclear phosphoprotein UL3 homolog from Varicella-zoster virus (strain Oka vaccine) (HHV-3).